The primary structure comprises 212 residues: MTDLSDIRREYTQGGLRRADLPKNPMQLFELWMTQARDAQLSDPTAMCVATVDEHGQPFQRIVLLKRFDDSGFVFFTNLGSRKALQIAANNKVSLHFPWHPIERQVSILGEAQPLSTAEVLKYFMTRPKESQIAAWVSQQSSKLSARQVLEGKFFEMKAKFAKGDVPLPSFWGGYLVKPSSIEFWQGGEHRLHDRFLYTREAQAWQIDRLAP.

Substrate-binding positions include 8–11 (RREY) and Lys-66. Residues 61-66 (RIVLLK), 76-77 (FT), Arg-82, Lys-83, and Gln-105 each bind FMN. Positions 123, 127, and 131 each coordinate substrate. Residues 140 to 141 (QS) and Trp-185 contribute to the FMN site. Position 191–193 (191–193 (RLH)) interacts with substrate. Arg-195 is a binding site for FMN.

This sequence belongs to the pyridoxamine 5'-phosphate oxidase family. As to quaternary structure, homodimer. Requires FMN as cofactor.

The enzyme catalyses pyridoxamine 5'-phosphate + O2 + H2O = pyridoxal 5'-phosphate + H2O2 + NH4(+). It carries out the reaction pyridoxine 5'-phosphate + O2 = pyridoxal 5'-phosphate + H2O2. It participates in cofactor metabolism; pyridoxal 5'-phosphate salvage; pyridoxal 5'-phosphate from pyridoxamine 5'-phosphate: step 1/1. The protein operates within cofactor metabolism; pyridoxal 5'-phosphate salvage; pyridoxal 5'-phosphate from pyridoxine 5'-phosphate: step 1/1. Its function is as follows. Catalyzes the oxidation of either pyridoxine 5'-phosphate (PNP) or pyridoxamine 5'-phosphate (PMP) into pyridoxal 5'-phosphate (PLP). The polypeptide is Pyridoxine/pyridoxamine 5'-phosphate oxidase (Shewanella oneidensis (strain ATCC 700550 / JCM 31522 / CIP 106686 / LMG 19005 / NCIMB 14063 / MR-1)).